The primary structure comprises 131 residues: Small ribosomal subunit protein uS8 (131 aa).

It belongs to the universal ribosomal protein uS8 family. In terms of assembly, part of the 30S ribosomal subunit. Contacts proteins S5 and S12.

Its function is as follows. One of the primary rRNA binding proteins, it binds directly to 16S rRNA central domain where it helps coordinate assembly of the platform of the 30S subunit. This is Small ribosomal subunit protein uS8 from Sulfurovum sp. (strain NBC37-1).